Consider the following 526-residue polypeptide: Peptide chain release factor 3 (526 aa).

In terms of domain architecture, tr-type G spans 9 to 277; sequence DKRRTFAIIS…GIVEWAPVPQ (269 aa). GTP-binding positions include 18–25, 86–90, and 140–143; these read SHPDAGKT, DTPGH, and NKLD.

The protein belongs to the TRAFAC class translation factor GTPase superfamily. Classic translation factor GTPase family. PrfC subfamily.

It is found in the cytoplasm. Functionally, increases the formation of ribosomal termination complexes and stimulates activities of RF-1 and RF-2. It binds guanine nucleotides and has strong preference for UGA stop codons. It may interact directly with the ribosome. The stimulation of RF-1 and RF-2 is significantly reduced by GTP and GDP, but not by GMP. This is Peptide chain release factor 3 from Shewanella pealeana (strain ATCC 700345 / ANG-SQ1).